The chain runs to 75 residues: UPF0352 protein KPN78578_25810 (75 aa).

Belongs to the UPF0352 family.

This Klebsiella pneumoniae subsp. pneumoniae (strain ATCC 700721 / MGH 78578) protein is UPF0352 protein KPN78578_25810.